A 322-amino-acid polypeptide reads, in one-letter code: F-box protein At2g16300 (322 aa).

Residues 2 to 50 enclose the F-box domain; the sequence is ADWSLLPNDLLELIVGHLETSFEIVLFRSVCSSWRSVVPPQDQSRCLSI.

The protein is F-box protein At2g16300 of Arabidopsis thaliana (Mouse-ear cress).